The sequence spans 295 residues: G1/S-specific cyclin-D1 (295 aa).

The Cyclin N-terminal domain maps to 28 to 152 (LRAMLKAEET…LLVNKLKWNL (125 aa)). Residues 262–295 (AQQNMDPKAAEEEEEEEEEVDLACTPTDVRDVDI) are disordered. Lys-269 is covalently cross-linked (Glycyl lysine isopeptide (Lys-Gly) (interchain with G-Cter in ubiquitin)). Positions 272-282 (EEEEEEEEEVD) are enriched in acidic residues. Thr-286 bears the Phosphothreonine mark.

It belongs to the cyclin family. Cyclin D subfamily. Interacts with either CDK4 or CDK6 protein kinase to form a serine/threonine kinase holoenzyme complex. The cyclin subunit imparts substrate specificity to the complex. Component of the ternary complex CCND1/CDK4/CDKN1B required for nuclear translocation and modulation of CDK4-mediated kinase activity. Interacts directly with CDKN1B. Can form similar complexes with either CDKN1A or CDKN2A. Interacts with UHRF2; the interaction ubiquitinates CCND1 and appears to occur independently of phosphorylation. Interacts with USP2. Interacts (via cyclin N-terminal domain) with INSM1 (via N-terminal region); the interaction competes with the binding of CCND1 to CDK4 during cell cycle progression and inhibits CDK4 activity. Interacts with CDK4; the interaction is prevented with the binding of CCND1 to INSM1 during cell cycle progression. Phosphorylation at Thr-286 by MAP kinases is required for ubiquitination and degradation by the DCX(AMBRA1) complex. It also plays an essential role for recognition by the FBXO31 component of SCF (SKP1-cullin-F-box) protein ligase complex following DNA damage. In terms of processing, ubiquitinated at Lys-269 by the DCX(AMBRA1) complex during the transition from G1 to S cell phase, leading to its degradation: ubiquitination is dependent on Thr-286 phosphorylation. The DCX(AMBRA1) complex represents the major regulator of CCND1 stability during the G1/S transition. Also ubiquitinated by the SCF(FBXO4) and Cul7-RING(FBXW8) ubiquitin-protein ligase complexes. Following DNA damage it is ubiquitinated by the SCF(FBXO31) protein ligase complex. SCF(FBXO31) ubiquitination is dependent on Thr-286 phosphorylation. Ubiquitinated also by UHRF2 apparently in a phosphorylation-independent manner. Ubiquitination leads to its degradation and G1 arrest. Deubiquitinated by USP2; leading to its stabilization.

It localises to the nucleus. It is found in the cytoplasm. The protein localises to the nucleus membrane. In terms of biological role, regulatory component of the cyclin D1-CDK4 (DC) complex that phosphorylates and inhibits members of the retinoblastoma (RB) protein family including RB1 and regulates the cell-cycle during G(1)/S transition. Phosphorylation of RB1 allows dissociation of the transcription factor E2F from the RB/E2F complex and the subsequent transcription of E2F target genes which are responsible for the progression through the G(1) phase. Hypophosphorylates RB1 in early G(1) phase. Cyclin D-CDK4 complexes are major integrators of various mitogenenic and antimitogenic signals. Also a substrate for SMAD3, phosphorylating SMAD3 in a cell-cycle-dependent manner and repressing its transcriptional activity. Component of the ternary complex, cyclin D1/CDK4/CDKN1B, required for nuclear translocation and activity of the cyclin D-CDK4 complex. Exhibits transcriptional corepressor activity with INSM1 on the NEUROD1 and INS promoters in a cell cycle-independent manner. The sequence is that of G1/S-specific cyclin-D1 (CCND1) from Pongo abelii (Sumatran orangutan).